Consider the following 287-residue polypeptide: Bifunctional protein FolD (287 aa).

NADP(+) is bound by residues 160-162 (GRS), S189, and T230.

This sequence belongs to the tetrahydrofolate dehydrogenase/cyclohydrolase family. As to quaternary structure, homodimer.

It catalyses the reaction (6R)-5,10-methylene-5,6,7,8-tetrahydrofolate + NADP(+) = (6R)-5,10-methenyltetrahydrofolate + NADPH. The catalysed reaction is (6R)-5,10-methenyltetrahydrofolate + H2O = (6R)-10-formyltetrahydrofolate + H(+). Its pathway is one-carbon metabolism; tetrahydrofolate interconversion. Catalyzes the oxidation of 5,10-methylenetetrahydrofolate to 5,10-methenyltetrahydrofolate and then the hydrolysis of 5,10-methenyltetrahydrofolate to 10-formyltetrahydrofolate. In Chlamydia abortus (strain DSM 27085 / S26/3) (Chlamydophila abortus), this protein is Bifunctional protein FolD.